Reading from the N-terminus, the 493-residue chain is Transcription termination factor MTERF5, chloroplastic (493 aa).

A chloroplast-targeting transit peptide spans 1-43 (MQSLSQLGPSEIFLVARREKPSTRAQLWFTGRLSFRQETNGIR).

This sequence belongs to the mTERF family. Interacts with pTAC6. As to expression, expressed in roots, rosette leaves, cauline leaves, stems, flower buds and open flowers.

The protein localises to the plastid. Its subcellular location is the chloroplast. Transcription termination factor required for processing and steady-state levels of plastid transcripts. Involved also in chloroplast transcriptional pausing, a general feature of chloroplast genes. Specifically and positively regulates the transcription of chloroplast psbEFLJ encoding for photosystem II (PSII) core subunits psbE, psbF, psbL and psbJ; causes the plastid-encoded RNA polymerase (PEP) complex to pause at psbEFLJ by binding to the +30 to +51 region of double-stranded DNA, and recruits additional pTAC6 to the transcriptionally paused region of psbEFLJ. May play a role in response to abiotic stresses. The chain is Transcription termination factor MTERF5, chloroplastic from Arabidopsis thaliana (Mouse-ear cress).